The sequence spans 311 residues: 4-diphosphocytidyl-2-C-methyl-D-erythritol kinase (311 aa).

Residue lysine 11 is part of the active site. Residue 94–104 (PVAAGLAGGSA) participates in ATP binding. The active site involves aspartate 136.

The protein belongs to the GHMP kinase family. IspE subfamily.

The enzyme catalyses 4-CDP-2-C-methyl-D-erythritol + ATP = 4-CDP-2-C-methyl-D-erythritol 2-phosphate + ADP + H(+). It participates in isoprenoid biosynthesis; isopentenyl diphosphate biosynthesis via DXP pathway; isopentenyl diphosphate from 1-deoxy-D-xylulose 5-phosphate: step 3/6. Catalyzes the phosphorylation of the position 2 hydroxy group of 4-diphosphocytidyl-2C-methyl-D-erythritol. The protein is 4-diphosphocytidyl-2-C-methyl-D-erythritol kinase of Synechococcus sp. (strain JA-2-3B'a(2-13)) (Cyanobacteria bacterium Yellowstone B-Prime).